Reading from the N-terminus, the 269-residue chain is 3-deoxy-manno-octulosonate cytidylyltransferase (269 aa).

Belongs to the KdsB family.

The protein resides in the cytoplasm. The enzyme catalyses 3-deoxy-alpha-D-manno-oct-2-ulosonate + CTP = CMP-3-deoxy-beta-D-manno-octulosonate + diphosphate. It functions in the pathway nucleotide-sugar biosynthesis; CMP-3-deoxy-D-manno-octulosonate biosynthesis; CMP-3-deoxy-D-manno-octulosonate from 3-deoxy-D-manno-octulosonate and CTP: step 1/1. It participates in bacterial outer membrane biogenesis; lipopolysaccharide biosynthesis. In terms of biological role, activates KDO (a required 8-carbon sugar) for incorporation into bacterial lipopolysaccharide in Gram-negative bacteria. In Cupriavidus necator (strain ATCC 17699 / DSM 428 / KCTC 22496 / NCIMB 10442 / H16 / Stanier 337) (Ralstonia eutropha), this protein is 3-deoxy-manno-octulosonate cytidylyltransferase.